Reading from the N-terminus, the 242-residue chain is Probable transcriptional regulatory protein Bphy_2064 (242 aa).

This sequence belongs to the TACO1 family.

It is found in the cytoplasm. This is Probable transcriptional regulatory protein Bphy_2064 from Paraburkholderia phymatum (strain DSM 17167 / CIP 108236 / LMG 21445 / STM815) (Burkholderia phymatum).